The sequence spans 305 residues: Protein MFI (305 aa).

As to quaternary structure, can homodimerize. Interacts with MFF; the interaction inhibits MFF interaction with DNM1L.

It localises to the cytoplasm. The protein localises to the cytosol. Its subcellular location is the mitochondrion outer membrane. Acts as an inhibitor of mitochondrial fission. Interacts with MFF and prevents DNM1L recruitment to mitochondria, promoting a more fused mitochondrial network. In Rattus norvegicus (Rat), this protein is Protein MFI.